The following is a 328-amino-acid chain: Tetraacyldisaccharide 4'-kinase (328 aa).

Residue 59–66 (TAGGNGKT) coordinates ATP.

This sequence belongs to the LpxK family.

The catalysed reaction is a lipid A disaccharide + ATP = a lipid IVA + ADP + H(+). Its pathway is glycolipid biosynthesis; lipid IV(A) biosynthesis; lipid IV(A) from (3R)-3-hydroxytetradecanoyl-[acyl-carrier-protein] and UDP-N-acetyl-alpha-D-glucosamine: step 6/6. Transfers the gamma-phosphate of ATP to the 4'-position of a tetraacyldisaccharide 1-phosphate intermediate (termed DS-1-P) to form tetraacyldisaccharide 1,4'-bis-phosphate (lipid IVA). In Aliivibrio fischeri (strain MJ11) (Vibrio fischeri), this protein is Tetraacyldisaccharide 4'-kinase.